The sequence spans 203 residues: MRMSKALAAVVAISVSLSAAAMGVDATVESTCSDAAASDKRVHLAMCLSQLGHHRDADAWGLAKAATLVGVDKADLAADDIKELEAGASTAGIKPALAECAKQYRGVGFAFASAHDVINNRAYDVGEKKLDEALSLTQKCNAAFAKIGVPLQQPLAQLTADTIQIAIIAKAITCLVNVNNNPALVAAAAAAAAAKAPQQSQYP.

A signal peptide spans 1–26 (MRMSKALAAVVAISVSLSAAAMGVDA). Cystine bridges form between Cys-32-Cys-47 and Cys-100-Cys-140.

Belongs to the PMEI family.

The protein localises to the secreted. It is found in the extracellular space. It localises to the apoplast. Its function is as follows. Pectin methylesterase (PME) inhibitor that inhibits PME in vitro. The sequence is that of Pectinesterase inhibitor 12 from Oryza sativa subsp. japonica (Rice).